The sequence spans 102 residues: Large ribosomal subunit protein bL21 (102 aa).

The protein belongs to the bacterial ribosomal protein bL21 family. In terms of assembly, part of the 50S ribosomal subunit. Contacts protein L20.

This protein binds to 23S rRNA in the presence of protein L20. The polypeptide is Large ribosomal subunit protein bL21 (Latilactobacillus sakei subsp. sakei (strain 23K) (Lactobacillus sakei subsp. sakei)).